We begin with the raw amino-acid sequence, 228 residues long: Ribosomal RNA small subunit methyltransferase G (228 aa).

Residues Gly-92, Phe-97, 115-117 (EAT), 143-144 (AE), and Arg-156 each bind S-adenosyl-L-methionine.

It belongs to the methyltransferase superfamily. RNA methyltransferase RsmG family.

The protein localises to the cytoplasm. Specifically methylates the N7 position of a guanine in 16S rRNA. The polypeptide is Ribosomal RNA small subunit methyltransferase G (Thermosynechococcus vestitus (strain NIES-2133 / IAM M-273 / BP-1)).